The chain runs to 140 residues: Nucleoside diphosphate kinase (140 aa).

ATP-binding residues include Lys10, Phe58, Arg86, Thr92, Arg103, and Asn113. The active-site Pros-phosphohistidine intermediate is the His116.

It belongs to the NDK family. Homohexamer. Requires Mg(2+) as cofactor.

It localises to the cytoplasm. It carries out the reaction a 2'-deoxyribonucleoside 5'-diphosphate + ATP = a 2'-deoxyribonucleoside 5'-triphosphate + ADP. The catalysed reaction is a ribonucleoside 5'-diphosphate + ATP = a ribonucleoside 5'-triphosphate + ADP. Its function is as follows. Major role in the synthesis of nucleoside triphosphates other than ATP. The ATP gamma phosphate is transferred to the NDP beta phosphate via a ping-pong mechanism, using a phosphorylated active-site intermediate. The chain is Nucleoside diphosphate kinase from Methanocaldococcus jannaschii (strain ATCC 43067 / DSM 2661 / JAL-1 / JCM 10045 / NBRC 100440) (Methanococcus jannaschii).